Here is a 518-residue protein sequence, read N- to C-terminus: 3-phosphoshikimate 1-carboxyvinyltransferase 1, chloroplastic (518 aa).

The N-terminal 74 residues, 1–74, are a transit peptide targeting the chloroplast; it reads MAQISSMGQG…RISASVVTAQ (74 aa). 3-phosphoshikimate is bound by residues Lys-97, Ser-98, and Arg-102. Residue Lys-97 coordinates phosphoenolpyruvate. Phosphoenolpyruvate contacts are provided by Gly-175 and Arg-205. Ser-252, Ser-253, Gln-254, Ser-280, Asp-405, and Lys-432 together coordinate 3-phosphoshikimate. Gln-254 provides a ligand contact to phosphoenolpyruvate. Asp-405 (proton acceptor) is an active-site residue. Phosphoenolpyruvate-binding residues include Arg-436, Arg-478, and Lys-503.

This sequence belongs to the EPSP synthase family.

It is found in the plastid. The protein localises to the chloroplast. It carries out the reaction 3-phosphoshikimate + phosphoenolpyruvate = 5-O-(1-carboxyvinyl)-3-phosphoshikimate + phosphate. The protein operates within metabolic intermediate biosynthesis; chorismate biosynthesis; chorismate from D-erythrose 4-phosphate and phosphoenolpyruvate: step 6/7. Catalyzes the transfer of the enolpyruvyl moiety of phosphoenolpyruvate (PEP) to the 5-hydroxyl of shikimate-3-phosphate (S3P) to produce enolpyruvyl shikimate-3-phosphate and inorganic phosphate. This Nicotiana tabacum (Common tobacco) protein is 3-phosphoshikimate 1-carboxyvinyltransferase 1, chloroplastic (EPSPS-1).